The following is a 373-amino-acid chain: Peptide chain release factor 1-like, mitochondrial (373 aa).

The transit peptide at 1 to 13 (MRSGFLRSARRLW) directs the protein to the mitochondrion. Residues 56-111 (QLAAAARLLNEKERELRDTESLLHDENEDLKKLAESEIALCQKEIAELKHRIISLL) are a coiled coil. The interval 229 to 293 (PKDLRIDTKR…LRARLYSMRL (65 aa)) is GGQ domain. The GGQ motif lies at 243 to 245 (GGQ). The residue at position 245 (Gln-245) is an N5-methylglutamine.

The protein belongs to the prokaryotic/mitochondrial release factor family. Post-translationally, methylation of glutamine in the GGQ triplet by HEMK1 is conserved from bacteria to mammals.

Its subcellular location is the mitochondrion. Functionally, mitochondrial peptide chain release factor that directs the termination of translation in response to the peptide chain termination codons UAA and UAG. In Rattus norvegicus (Rat), this protein is Peptide chain release factor 1-like, mitochondrial (Mtrf1l).